The following is a 122-amino-acid chain: Fluoride-specific ion channel FluC 2 (122 aa).

4 helical membrane passes run 3–23 (ITAI…RMFI), 38–58 (TSIV…LNLT), 62–82 (LLLL…SFIY), and 93–113 (FMHL…CFYL). Na(+)-binding residues include G72 and S75.

The protein belongs to the fluoride channel Fluc/FEX (TC 1.A.43) family.

The protein localises to the cell inner membrane. It catalyses the reaction fluoride(in) = fluoride(out). Its activity is regulated as follows. Na(+) is not transported, but it plays an essential structural role and its presence is essential for fluoride channel function. Its function is as follows. Fluoride-specific ion channel. Important for reducing fluoride concentration in the cell, thus reducing its toxicity. The sequence is that of Fluoride-specific ion channel FluC 2 from Prochlorococcus marinus (strain MIT 9312).